A 56-amino-acid polypeptide reads, in one-letter code: Large ribosomal subunit protein eL37 (56 aa).

Zn(2+)-binding residues include C19, C22, C34, and C37. The segment at 19 to 37 adopts a C4-type zinc-finger fold; that stretch reads CRRCGSVSFNVHTKQCTSC.

It belongs to the eukaryotic ribosomal protein eL37 family. The cofactor is Zn(2+).

Its function is as follows. Binds to the 23S rRNA. The sequence is that of Large ribosomal subunit protein eL37 (rpl37e) from Methanosarcina acetivorans (strain ATCC 35395 / DSM 2834 / JCM 12185 / C2A).